Reading from the N-terminus, the 141-residue chain is Secreted RxLR effector protein 69 (141 aa).

The first 19 residues, 1 to 19 (MHSSTILFVLGAAILAVNG), serve as a signal peptide directing secretion. The RxLR-dEER motif lies at 38 to 53 (RLLRSNLMKHETGEER). N-linked (GlcNAc...) asparagine glycosylation is present at asparagine 120.

This sequence belongs to the RxLR effector family.

The protein resides in the secreted. The protein localises to the host nucleus. Its function is as follows. Secreted effector that completely suppresses the host cell death induced by cell death-inducing proteins. The polypeptide is Secreted RxLR effector protein 69 (Plasmopara viticola (Downy mildew of grapevine)).